The following is a 319-amino-acid chain: Ubiquinone biosynthesis protein COQ4, mitochondrial (319 aa).

The transit peptide at 1 to 28 (MISRSIFSKSVSLQRSQNRSFLLTAASA) directs the protein to the mitochondrion. Zn(2+) is bound by residues H205, D206, H209, and E221.

This sequence belongs to the COQ4 family. In terms of assembly, component of a multi-subunit COQ enzyme complex, composed of at least COQ3, COQ4, COQ5, COQ6, COQ7 and COQ9. Zn(2+) serves as cofactor.

Its subcellular location is the mitochondrion inner membrane. It catalyses the reaction a 4-hydroxy-3-methoxy-5-(all-trans-polyprenyl)benzoate + H(+) = a 2-methoxy-6-(all-trans-polyprenyl)phenol + CO2. The protein operates within cofactor biosynthesis; ubiquinone biosynthesis. Its function is as follows. Lyase that catalyzes the C1-decarboxylation of 4-hydroxy-3-methoxy-5-(all-trans-polyprenyl)benzoic acid into 2-methoxy-6-(all-trans-polyprenyl)phenol during ubiquinone biosynthesis. This Clavispora lusitaniae (strain ATCC 42720) (Yeast) protein is Ubiquinone biosynthesis protein COQ4, mitochondrial.